The following is a 283-amino-acid chain: uncharacterized protein (283 aa).

This is an uncharacterized protein from Halobacterium salinarum (strain ATCC 700922 / JCM 11081 / NRC-1) (Halobacterium halobium).